The following is a 547-amino-acid chain: Chaperonin GroEL 2 (547 aa).

ATP is bound by residues 30–33 (TLGP), Lys51, 87–91 (DGTTT), Gly415, and Asp496.

This sequence belongs to the chaperonin (HSP60) family. Forms a cylinder of 14 subunits composed of two heptameric rings stacked back-to-back. Interacts with the co-chaperonin GroES.

It localises to the cytoplasm. The enzyme catalyses ATP + H2O + a folded polypeptide = ADP + phosphate + an unfolded polypeptide.. In terms of biological role, together with its co-chaperonin GroES, plays an essential role in assisting protein folding. The GroEL-GroES system forms a nano-cage that allows encapsulation of the non-native substrate proteins and provides a physical environment optimized to promote and accelerate protein folding. The protein is Chaperonin GroEL 2 of Rhodopseudomonas palustris (strain ATCC BAA-98 / CGA009).